Reading from the N-terminus, the 452-residue chain is MLLLLLLLLVAAAQAVALAPRRFTPDWQSLDSRPLPSWFDEAKFGVFVHWGVFSVPAWGSEWFWWHWQGDRMPAYQRFMTENYPPGFSYADFAPQFTARFFHPDQWAELFQAAGAKYVVLTTKHHEGFTNWPSPVSWNWNSKDVGPHRDLVGELGAAVRKRNIRYGLYHSLLEWFHPLYLLDKKNGFKTQHFVRAKTMPELYDLVNSYKPDLIWSDGEWECPDTYWNSTSFLAWLYNDSPVKDEVIVNDRWGQNCSCHHGGYYNCQDKYKPQSLPDHKWEMCTSMDRASWGYRKDMTMSTIAKENEIIEELVQTVSLGGNYLLNIGPTKDGLIVPIFQERLLAVGKWLQINGEAIYASKPWRVQSEKNKTVVWYTTKNATVYATFLYWPENGIVNLKSPKTTSATKITMLGLEGDLSWTQDPLEGVLISLPQLPPTVLPVEFAWTLKLTKVN.

A signal peptide spans methionine 1–alanine 17. N-linked (GlcNAc...) asparagine glycans are attached at residues asparagine 227, asparagine 254, asparagine 368, and asparagine 378.

Belongs to the glycosyl hydrolase 29 family. Homotetramer.

The protein localises to the lysosome. The catalysed reaction is an alpha-L-fucoside + H2O = L-fucose + an alcohol. It catalyses the reaction a neolactoside IV(2)-alpha-Fuc-nLc4Cer(d18:1(4E)) + H2O = a neolactoside nLc4Cer(d18:1(4E)) + L-fucose. The enzyme catalyses a neolactoside IV(2)-alpha-Fuc-nLc4Cer(d18:0) + H2O = a neolactoside nLc4Cer(d18:0) + L-fucose. Functionally, alpha-L-fucosidase is responsible for hydrolyzing the alpha-1,6-linked fucose joined to the reducing-end N-acetylglucosamine of the carbohydrate moieties of glycoproteins. This chain is Tissue alpha-L-fucosidase (Fuca1), found in Mus musculus (Mouse).